We begin with the raw amino-acid sequence, 207 residues long: ATP synthase subunit delta (207 aa).

The protein belongs to the ATPase delta chain family. F-type ATPases have 2 components, F(1) - the catalytic core - and F(0) - the membrane proton channel. F(1) has five subunits: alpha(3), beta(3), gamma(1), delta(1), epsilon(1). F(0) has three main subunits: a(1), b(2) and c(10-14). The alpha and beta chains form an alternating ring which encloses part of the gamma chain. F(1) is attached to F(0) by a central stalk formed by the gamma and epsilon chains, while a peripheral stalk is formed by the delta and b chains.

The protein localises to the cell inner membrane. Functionally, f(1)F(0) ATP synthase produces ATP from ADP in the presence of a proton or sodium gradient. F-type ATPases consist of two structural domains, F(1) containing the extramembraneous catalytic core and F(0) containing the membrane proton channel, linked together by a central stalk and a peripheral stalk. During catalysis, ATP synthesis in the catalytic domain of F(1) is coupled via a rotary mechanism of the central stalk subunits to proton translocation. Its function is as follows. This protein is part of the stalk that links CF(0) to CF(1). It either transmits conformational changes from CF(0) to CF(1) or is implicated in proton conduction. The polypeptide is ATP synthase subunit delta (Psychrobacter cryohalolentis (strain ATCC BAA-1226 / DSM 17306 / VKM B-2378 / K5)).